The following is a 122-amino-acid chain: LYR motif-containing protein 1 (122 aa).

The protein belongs to the complex I LYR family. As to expression, high levels in adipose tissue.

The protein localises to the nucleus. In terms of biological role, may promote cell proliferation and inhibition of apoptosis of preadipocytes. This is LYR motif-containing protein 1 (LYRM1) from Homo sapiens (Human).